Consider the following 226-residue polypeptide: Cytidylate kinase (226 aa).

11–19 is a binding site for ATP; it reads GPAAAGKST.

Belongs to the cytidylate kinase family. Type 1 subfamily.

It localises to the cytoplasm. The catalysed reaction is CMP + ATP = CDP + ADP. It catalyses the reaction dCMP + ATP = dCDP + ADP. In Bacillus licheniformis (strain ATCC 14580 / DSM 13 / JCM 2505 / CCUG 7422 / NBRC 12200 / NCIMB 9375 / NCTC 10341 / NRRL NRS-1264 / Gibson 46), this protein is Cytidylate kinase.